The primary structure comprises 286 residues: Beta-lactamase SHV-29 (286 aa).

The N-terminal stretch at 1 to 21 (MRYIRLCIISLLATLPLAVHA) is a signal peptide. The active-site Acyl-ester intermediate is S66. The cysteines at positions 73 and 119 are disulfide-linked. Catalysis depends on E164, which acts as the Proton acceptor. A substrate-binding site is contributed by 230-232 (KTG).

Belongs to the class-A beta-lactamase family.

It carries out the reaction a beta-lactam + H2O = a substituted beta-amino acid. This chain is Beta-lactamase SHV-29 (bla), found in Klebsiella pneumoniae.